We begin with the raw amino-acid sequence, 873 residues long: Aminopeptidase M1-D (873 aa).

A required for membrane association region spans residues 96–203 (LGEGVLAMRF…MSTYLVAIVV (108 aa)). Substrate-binding positions include E136 and 269–273 (GAMEN). Position 305 (H305) interacts with Zn(2+). The active-site Proton acceptor is the E306. Zn(2+)-binding residues include H309 and E328. The Dileucine internalization motif signature appears at 721–722 (LL).

It belongs to the peptidase M1 family. In terms of assembly, homodimer. Zn(2+) is required as a cofactor.

The protein resides in the membrane. It localises to the microsome membrane. Its subcellular location is the cytoplasm. It carries out the reaction Release of an N-terminal amino acid, Xaa-|-Yaa- from a peptide, amide or arylamide. Xaa is preferably Ala, but may be most amino acids including Pro (slow action). When a terminal hydrophobic residue is followed by a prolyl residue, the two may be released as an intact Xaa-Pro dipeptide.. In Oryza sativa subsp. japonica (Rice), this protein is Aminopeptidase M1-D.